The following is a 200-amino-acid chain: Ribonuclease HII (200 aa).

Residues 1–200 (MRYGGVDEAG…EINKKLTDFI (200 aa)) enclose the RNase H type-2 domain. A divalent metal cation contacts are provided by Asp7, Glu8, and Asp99.

It belongs to the RNase HII family. The cofactor is Mn(2+). Requires Mg(2+) as cofactor.

The protein localises to the cytoplasm. It catalyses the reaction Endonucleolytic cleavage to 5'-phosphomonoester.. Its function is as follows. Endonuclease that specifically degrades the RNA of RNA-DNA hybrids. The protein is Ribonuclease HII of Nanoarchaeum equitans (strain Kin4-M).